Reading from the N-terminus, the 388-residue chain is MKRVVLIVLDSVGIGELPDAHLYGDEGSNTLANTAKKVGGFELPNLEKLGLGKIHPILGLKGDIKALGAYGKMGEKSPGKDTTTGHWEICGLILEKPFPVYPNGFPEDLIKRFEEAIGRKTLGNKPASGTAIIEELGEEHMRTGYPIVYTSADSVFQIAAHEEVIPLEELYKMCKIARGLLTGEHAVGRVIARPFTGTPGNFKRTANRHDYSLEPTGKTVLDKLVEQGYEVLGVGKIYDIFAGRGLTWHESTKNNEDGLVKTVNLLYKDFTGLLFTNLVDFDMVYGHRNNAEGYYEALKQFDSYLPKIMEKLREDDLLIITADHGCDPTTPSTDHSREYVPLLVYGHSIKEDVNLGTRETFADVAATLEEIFGLEPGIGQSFWGEIRK.

Mn(2+) contacts are provided by aspartate 10, aspartate 282, histidine 287, aspartate 323, histidine 324, and histidine 335.

The protein belongs to the phosphopentomutase family. Requires Mn(2+) as cofactor.

It localises to the cytoplasm. The enzyme catalyses 2-deoxy-alpha-D-ribose 1-phosphate = 2-deoxy-D-ribose 5-phosphate. It catalyses the reaction alpha-D-ribose 1-phosphate = D-ribose 5-phosphate. The protein operates within carbohydrate degradation; 2-deoxy-D-ribose 1-phosphate degradation; D-glyceraldehyde 3-phosphate and acetaldehyde from 2-deoxy-alpha-D-ribose 1-phosphate: step 1/2. Functionally, isomerase that catalyzes the conversion of deoxy-ribose 1-phosphate (dRib-1-P) and ribose 1-phosphate (Rib-1-P) to deoxy-ribose 5-phosphate (dRib-5-P) and ribose 5-phosphate (Rib-5-P), respectively. This Carboxydothermus hydrogenoformans (strain ATCC BAA-161 / DSM 6008 / Z-2901) protein is Phosphopentomutase.